A 245-amino-acid chain; its full sequence is 1-(5-phosphoribosyl)-5-[(5-phosphoribosylamino)methylideneamino] imidazole-4-carboxamide isomerase (245 aa).

Residue D7 is the Proton acceptor of the active site. The Proton donor role is filled by D129.

The protein belongs to the HisA/HisF family.

It is found in the cytoplasm. It catalyses the reaction 1-(5-phospho-beta-D-ribosyl)-5-[(5-phospho-beta-D-ribosylamino)methylideneamino]imidazole-4-carboxamide = 5-[(5-phospho-1-deoxy-D-ribulos-1-ylimino)methylamino]-1-(5-phospho-beta-D-ribosyl)imidazole-4-carboxamide. It participates in amino-acid biosynthesis; L-histidine biosynthesis; L-histidine from 5-phospho-alpha-D-ribose 1-diphosphate: step 4/9. The polypeptide is 1-(5-phosphoribosyl)-5-[(5-phosphoribosylamino)methylideneamino] imidazole-4-carboxamide isomerase (Shigella boydii serotype 4 (strain Sb227)).